Here is a 132-residue protein sequence, read N- to C-terminus: Small ribosomal subunit protein uS8c (132 aa).

Belongs to the universal ribosomal protein uS8 family. As to quaternary structure, part of the 30S ribosomal subunit.

It localises to the plastid. The protein localises to the cyanelle. In terms of biological role, one of the primary rRNA binding proteins, it binds directly to 16S rRNA central domain where it helps coordinate assembly of the platform of the 30S subunit. The chain is Small ribosomal subunit protein uS8c (rps8) from Cyanophora paradoxa.